Here is a 201-residue protein sequence, read N- to C-terminus: 3-isopropylmalate dehydratase small subunit (201 aa).

This sequence belongs to the LeuD family. LeuD type 1 subfamily. Heterodimer of LeuC and LeuD.

The enzyme catalyses (2R,3S)-3-isopropylmalate = (2S)-2-isopropylmalate. The protein operates within amino-acid biosynthesis; L-leucine biosynthesis; L-leucine from 3-methyl-2-oxobutanoate: step 2/4. Functionally, catalyzes the isomerization between 2-isopropylmalate and 3-isopropylmalate, via the formation of 2-isopropylmaleate. This chain is 3-isopropylmalate dehydratase small subunit, found in Shewanella sp. (strain MR-7).